We begin with the raw amino-acid sequence, 184 residues long: 20.9 kDa protein (184 aa).

The chain is 20.9 kDa protein from Zymomonas mobilis subsp. mobilis (strain ATCC 10988 / DSM 424 / LMG 404 / NCIMB 8938 / NRRL B-806 / ZM1).